A 577-amino-acid polypeptide reads, in one-letter code: MGGCSSAFAVSTRMIRFSRGRVPAAILPVTSNDEPCCSCSPENNNKNNDGGGGGCDGGEHQKGKSWRRWQYRRCGGGGGGGGGRKNAILGDAADVKTAAGFAERYRLGAELGRGEFGVTRRCSDAATGEALACKTIRRKRLRRCRGDAEDVRREVEILRRISALGAGADSVVRLRDACEDSDGVHLVMELCEGGELFDRIFARGHYTERAAAKLARTIVGVVQLCHENGVMHRDLKPENFLFANKSEDSPLKAIDFGLSVFFKPGERFTQVVGSTYYMAPEVLNRSYGPEADVWSAGVILYILLCGVPPFWGDNDEKTVTAILQGGINFQREPWPKVSPHAKDLVSKMLDPDPSTRLTAKEVLEHPWLKNADRAPNVSLGEIVRSRLMQFSAMNKFKKKALGVVAKNLPVEEMDKYTQMFHKMDKDNSGNLTLEDLKLGLQINGHPVPETEIEMLLEAGDIDGNGTLDCEEFVTVLLHIKKMSNEEYLPKAFKFFDKDGNGFIEMEELMDALGDELGPTEQVVKDIIRDIDTDKDGRISYQEFESMMISGSDWRNASRRYSKANFSSLSRKLCKGNS.

The N-myristoyl glycine moiety is linked to residue glycine 2. The region spanning 105 to 368 is the Protein kinase domain; sequence YRLGAELGRG…AKEVLEHPWL (264 aa). ATP is bound by residues 111–119 and lysine 134; that span reads LGRGEFGVT. Residue aspartate 234 is the Proton acceptor of the active site. Residues 374 to 404 are autoinhibitory domain; it reads APNVSLGEIVRSRLMQFSAMNKFKKKALGVV. 4 EF-hand domains span residues 411 to 446, 447 to 482, 483 to 518, and 520 to 553; these read EEMDKYTQMFHKMDKDNSGNLTLEDLKLGLQINGHP, VPETEIEMLLEAGDIDGNGTLDCEEFVTVLLHIKKM, SNEEYLPKAFKFFDKDGNGFIEMEELMDALGDELGP, and EQVVKDIIRDIDTDKDGRISYQEFESMMISGSDW. Aspartate 424, aspartate 426, serine 428, asparagine 430, aspartate 435, aspartate 460, aspartate 462, asparagine 464, threonine 466, glutamate 471, aspartate 496, aspartate 498, asparagine 500, glutamate 507, aspartate 531, aspartate 533, aspartate 535, arginine 537, and glutamate 542 together coordinate Ca(2+).

This sequence belongs to the protein kinase superfamily. Ser/Thr protein kinase family. CDPK subfamily.

It localises to the membrane. The catalysed reaction is L-seryl-[protein] + ATP = O-phospho-L-seryl-[protein] + ADP + H(+). The enzyme catalyses L-threonyl-[protein] + ATP = O-phospho-L-threonyl-[protein] + ADP + H(+). Its activity is regulated as follows. Activated by calcium. Autophosphorylation may play an important role in the regulation of the kinase activity. In terms of biological role, may play a role in signal transduction pathways that involve calcium as a second messenger. This Oryza sativa subsp. japonica (Rice) protein is Calcium-dependent protein kinase 22.